The primary structure comprises 55 residues: Large ribosomal subunit protein bL33 (55 aa).

This sequence belongs to the bacterial ribosomal protein bL33 family.

In Allorhizobium ampelinum (strain ATCC BAA-846 / DSM 112012 / S4) (Agrobacterium vitis (strain S4)), this protein is Large ribosomal subunit protein bL33.